A 386-amino-acid polypeptide reads, in one-letter code: Patatin (386 aa).

The first 23 residues, 1–23, serve as a signal peptide directing secretion; the sequence is MATTKSFLILFFMILATTSSTCA. A PNPLA domain is found at 32–229; it reads LSIDGGGIKG…TVGDPALLSL (198 aa). The GXGXXG motif lies at 36-41; the sequence is GGGIKG. Positions 75–79 match the GXSXG motif; that stretch reads GTSTG. Ser-77 serves as the catalytic Nucleophile. N-linked (GlcNAc...) asparagine glycosylation is present at Asn-115. The Proton acceptor role is filled by Asp-215. The DGA/G signature appears at 215 to 217; it reads DGA.

The protein belongs to the patatin family.

It localises to the vacuole. Functionally, probable lipolytic acyl hydrolase (LAH), an activity which is thought to be involved in the response of tubers to pathogens. In Solanum tuberosum (Potato), this protein is Patatin.